Reading from the N-terminus, the 424-residue chain is 26S proteasome regulatory subunit 6A homolog A (424 aa).

Positions 1–21 (MATPMVEDTSSFEEDQLASMS) are disordered. Ala-2 carries the post-translational modification N-acetylalanine. Position 19 is a phosphoserine (Ser-19). ATP is bound at residue 212 to 219 (GPPGTGKT). Residue Lys-235 forms a Glycyl lysine isopeptide (Lys-Gly) (interchain with G-Cter in ubiquitin) linkage. Thr-278 bears the O-acetylthreonine mark. Residues Lys-279 and Lys-416 each participate in a glycyl lysine isopeptide (Lys-Gly) (interchain with G-Cter in ubiquitin) cross-link.

The protein belongs to the AAA ATPase family. Component of the 19S regulatory particle (RP/PA700) base subcomplex of the 26S proteasome. The 26S proteasome is composed of a core protease (CP), known as the 20S proteasome, capped at one or both ends by the 19S regulatory particle (RP/PA700). The RP/PA700 complex is composed of at least 17 different subunits in two subcomplexes, the base and the lid, which form the portions proximal and distal to the 20S proteolytic core, respectively. In terms of tissue distribution, ubiquitous.

Its subcellular location is the cytoplasm. The protein resides in the nucleus. In terms of biological role, the 26S proteasome is involved in the ATP-dependent degradation of ubiquitinated proteins. The regulatory (or ATPase) complex confers ATP dependency and substrate specificity to the 26S complex. Interacts with transit peptides of proteins targeted to the chloroplast, and may be involved in the degradation of unimported plastid protein precursors. Plays a essential role in the gametophyte development. Involved in tolerance to zinc deficiency, possibly through alleviation of oxidative stresses or processing of poly-ubiquitinated proteins. The protein is 26S proteasome regulatory subunit 6A homolog A of Arabidopsis thaliana (Mouse-ear cress).